Consider the following 357-residue polypeptide: Meiotically up-regulated gene 135 protein (357 aa).

Belongs to the UPF0612 family.

Its subcellular location is the nucleus. Functionally, has a role in meiosis. The protein is Meiotically up-regulated gene 135 protein (mug135) of Schizosaccharomyces pombe (strain 972 / ATCC 24843) (Fission yeast).